A 246-amino-acid polypeptide reads, in one-letter code: Small ribosomal subunit protein uS3A (246 aa).

One can recognise a KH type-2 domain in the interval L21–A92. Positions D215–A246 are disordered.

Belongs to the universal ribosomal protein uS3 family.

The protein localises to the cytoplasm. It is found in the nucleus. Its subcellular location is the nucleolus. It localises to the mitochondrion inner membrane. The protein resides in the cytoskeleton. The protein localises to the spindle. The enzyme catalyses 2'-deoxyribonucleotide-(2'-deoxyribose 5'-phosphate)-2'-deoxyribonucleotide-DNA = a 3'-end 2'-deoxyribonucleotide-(2,3-dehydro-2,3-deoxyribose 5'-phosphate)-DNA + a 5'-end 5'-phospho-2'-deoxyribonucleoside-DNA + H(+). Functionally, component of the small ribosomal subunit. The ribosome is a large ribonucleoprotein complex responsible for the synthesis of proteins in the cell. Has endonuclease activity and plays a role in repair of damaged DNA. Also involved in other processes including regulation of transcription, translation of its cognate mRNA, spindle formation and chromosome movement during mitosis, and apoptosis. This Xenopus laevis (African clawed frog) protein is Small ribosomal subunit protein uS3A (rps3-a).